The following is a 357-amino-acid chain: UDP-N-acetylglucosamine--N-acetylmuramyl-(pentapeptide) pyrophosphoryl-undecaprenol N-acetylglucosamine transferase (357 aa).

Residues 13-15, Asn125, Arg161, Ser189, Ile243, and Gln288 each bind UDP-N-acetyl-alpha-D-glucosamine; that span reads TGG.

Belongs to the glycosyltransferase 28 family. MurG subfamily.

It localises to the cell inner membrane. It catalyses the reaction di-trans,octa-cis-undecaprenyl diphospho-N-acetyl-alpha-D-muramoyl-L-alanyl-D-glutamyl-meso-2,6-diaminopimeloyl-D-alanyl-D-alanine + UDP-N-acetyl-alpha-D-glucosamine = di-trans,octa-cis-undecaprenyl diphospho-[N-acetyl-alpha-D-glucosaminyl-(1-&gt;4)]-N-acetyl-alpha-D-muramoyl-L-alanyl-D-glutamyl-meso-2,6-diaminopimeloyl-D-alanyl-D-alanine + UDP + H(+). It functions in the pathway cell wall biogenesis; peptidoglycan biosynthesis. In terms of biological role, cell wall formation. Catalyzes the transfer of a GlcNAc subunit on undecaprenyl-pyrophosphoryl-MurNAc-pentapeptide (lipid intermediate I) to form undecaprenyl-pyrophosphoryl-MurNAc-(pentapeptide)GlcNAc (lipid intermediate II). This is UDP-N-acetylglucosamine--N-acetylmuramyl-(pentapeptide) pyrophosphoryl-undecaprenol N-acetylglucosamine transferase from Bordetella petrii (strain ATCC BAA-461 / DSM 12804 / CCUG 43448).